The sequence spans 283 residues: Homeobox-leucine zipper protein HAT2 (283 aa).

The tract at residues 64–134 (VNCEEDTGVS…GETSRKKLRL (71 aa)) is disordered. The segment covering 73 to 84 (SSPNSTISSTIS) has biased composition (low complexity). Residues 127–186 (TSRKKLRLSKDQSAFLEETFKEHNTLNPKQKLALAKKLNLTARQVEVWFQNRRARTKLKQ) constitute a DNA-binding region (homeobox). A leucine-zipper region spans residues 194-215 (LKRCVEKLTEENRRLQKEAMEL).

The protein belongs to the HD-ZIP homeobox family. Class II subfamily. In terms of assembly, interacts with RBR1.

The protein localises to the nucleus. Probable transcription factor that plays a role in auxin-mediated morphogenesis. Negatively regulates lateral root elongation. This chain is Homeobox-leucine zipper protein HAT2 (HAT2), found in Arabidopsis thaliana (Mouse-ear cress).